A 251-amino-acid polypeptide reads, in one-letter code: Small ribosomal subunit protein uS2 (251 aa).

Position 2 is an N-acetylserine (Ser-2). The disordered stretch occupies residues 209–251 (EIEQQTAEEAAQEAGEEEAKEEVTEEQTEAAEWAQENADNVEW). The segment covering 218–237 (AAQEAGEEEAKEEVTEEQTE) has biased composition (acidic residues). A compositionally biased stretch (low complexity) spans 238 to 251 (AAEWAQENADNVEW).

This sequence belongs to the universal ribosomal protein uS2 family. Component of the small ribosomal subunit. Mature ribosomes consist of a small (40S) and a large (60S) subunit. The 40S subunit contains about 33 different proteins and 1 molecule of RNA (18S). The 60S subunit contains about 49 different proteins and 3 molecules of RNA (25S, 5.8S and 5S). Interacts with RPS21.

The protein localises to the cytoplasm. Its function is as follows. Required for the assembly and/or stability of the 40S ribosomal subunit. Required for the processing of the 20S rRNA-precursor to mature 18S rRNA in a late step of the maturation of 40S ribosomal subunits. In Candida glabrata (strain ATCC 2001 / BCRC 20586 / JCM 3761 / NBRC 0622 / NRRL Y-65 / CBS 138) (Yeast), this protein is Small ribosomal subunit protein uS2.